Here is a 424-residue protein sequence, read N- to C-terminus: L-glutamine:2-deoxy-scyllo-inosose aminotransferase (424 aa).

N6-(pyridoxal phosphate)lysine is present on lysine 202.

This sequence belongs to the DegT/DnrJ/EryC1 family. L-glutamine:2-deoxy-scyllo-inosose/scyllo-inosose aminotransferase subfamily. Pyridoxal 5'-phosphate is required as a cofactor.

The catalysed reaction is 2-deoxy-L-scyllo-inosose + L-glutamine = 2-deoxy-scyllo-inosamine + 2-oxoglutaramate. It catalyses the reaction 3-amino-2,3-dideoxy-scyllo-inosose + L-glutamine = 2-deoxystreptamine + 2-oxoglutaramate. Its pathway is metabolic intermediate biosynthesis; 2-deoxystreptamine biosynthesis; 2-deoxystreptamine from D-glucose 6-phosphate: step 2/4. It participates in metabolic intermediate biosynthesis; 2-deoxystreptamine biosynthesis; 2-deoxystreptamine from D-glucose 6-phosphate: step 4/4. It functions in the pathway antibiotic biosynthesis; paromomycin biosynthesis. In terms of biological role, catalyzes the PLP-dependent transamination of 2-deoxy-scyllo-inosose (2-DOI) to form 2-deoxy-scyllo-inosamine (2-DOIA) using L-glutamine as the amino donor. Also catalyzes the transamination of 3-amino-2,3-dideoxy-scyllo-inosose (keto-2-DOIA) into 2-deoxystreptamine (2-DOS). The polypeptide is L-glutamine:2-deoxy-scyllo-inosose aminotransferase (parS) (Streptomyces paromomycinus (Streptomyces rimosus subsp. paromomycinus)).